The chain runs to 447 residues: Methionine aminopeptidase 2 (447 aa).

Positions 1–86 (MAGATEGEDT…KNKKKKKKKI (86 aa)) are disordered. The span at 8–32 (EDTKVIESKINELNIDKPKLEDNNE) shows a compositional bias: basic and acidic residues. The span at 43 to 60 (GGDDDDDKEDDDDNDEIT) shows a compositional bias: acidic residues. Over residues 71–86 (KKKKKNKNKKKKKKKI) the composition is skewed to basic residues. Histidine 198 is a binding site for substrate. Residues aspartate 218, aspartate 229, and histidine 300 each contribute to the a divalent metal cation site. Histidine 308 contacts substrate. Residues glutamate 333 and glutamate 428 each coordinate a divalent metal cation.

It belongs to the peptidase M24A family. Methionine aminopeptidase eukaryotic type 2 subfamily. It depends on Co(2+) as a cofactor. Requires Zn(2+) as cofactor. The cofactor is Mn(2+). Fe(2+) serves as cofactor.

Its subcellular location is the cytoplasm. The catalysed reaction is Release of N-terminal amino acids, preferentially methionine, from peptides and arylamides.. In terms of biological role, cotranslationally removes the N-terminal methionine from nascent proteins. The N-terminal methionine is often cleaved when the second residue in the primary sequence is small and uncharged (Met-Ala-, Cys, Gly, Pro, Ser, Thr, or Val). This is Methionine aminopeptidase 2 from Candida albicans (strain WO-1) (Yeast).